Reading from the N-terminus, the 150-residue chain is 3-dehydroquinate dehydratase (150 aa).

Tyrosine 26 serves as the catalytic Proton acceptor. 3 residues coordinate substrate: asparagine 77, histidine 83, and aspartate 90. The active-site Proton donor is the histidine 103. Substrate contacts are provided by residues leucine 104–serine 105 and arginine 114.

It belongs to the type-II 3-dehydroquinase family. In terms of assembly, homododecamer.

The catalysed reaction is 3-dehydroquinate = 3-dehydroshikimate + H2O. Its pathway is metabolic intermediate biosynthesis; chorismate biosynthesis; chorismate from D-erythrose 4-phosphate and phosphoenolpyruvate: step 3/7. Catalyzes a trans-dehydration via an enolate intermediate. The protein is 3-dehydroquinate dehydratase of Vibrio cholerae serotype O1 (strain ATCC 39541 / Classical Ogawa 395 / O395).